The chain runs to 953 residues: Homeobox protein LUMINIDEPENDENS (953 aa).

Residues Lys-63–Gln-123 constitute a DNA-binding region (homeobox). Residues Glu-404–Ser-430 form a disordered region. Polar residues predominate over residues Ser-414–Arg-425. Repeat copies occupy residues Gln-498–Gly-502, Gln-507–Gly-511, Gln-516–Gly-520, Gln-525–Gly-529, and Gln-534–Gly-538. The segment at Gln-498 to Gly-538 is 5 X 5 AA repeats of Q-P-V-N-G. 3 disordered regions span residues Asn-606–Asp-668, Ala-733–Met-763, and Val-861–Arg-953. Positions Lys-608–Thr-623 are enriched in basic and acidic residues. Over residues Pro-651–Glu-661 the composition is skewed to low complexity. The segment covering Ala-733 to Lys-742 has biased composition (polar residues). Residues Ser-869–His-884 show a composition bias toward low complexity. Polar residues-rich tracts occupy residues Glu-888–Ala-934 and Thr-942–Arg-953.

Interacts with SUF4. As to expression, expressed in shoot apex, root apex, leaf primordia and floral buds.

It is found in the nucleus. In terms of biological role, seems to play a role in the regulation of flowering time in the autonomous flowering pathway by repressing FLOWERING LOCUS C expression. This Arabidopsis thaliana (Mouse-ear cress) protein is Homeobox protein LUMINIDEPENDENS (LD).